Consider the following 215-residue polypeptide: Leucyl/phenylalanyl-tRNA--protein transferase (215 aa).

Belongs to the L/F-transferase family.

It localises to the cytoplasm. The catalysed reaction is N-terminal L-lysyl-[protein] + L-leucyl-tRNA(Leu) = N-terminal L-leucyl-L-lysyl-[protein] + tRNA(Leu) + H(+). The enzyme catalyses N-terminal L-arginyl-[protein] + L-leucyl-tRNA(Leu) = N-terminal L-leucyl-L-arginyl-[protein] + tRNA(Leu) + H(+). It catalyses the reaction L-phenylalanyl-tRNA(Phe) + an N-terminal L-alpha-aminoacyl-[protein] = an N-terminal L-phenylalanyl-L-alpha-aminoacyl-[protein] + tRNA(Phe). Functionally, functions in the N-end rule pathway of protein degradation where it conjugates Leu, Phe and, less efficiently, Met from aminoacyl-tRNAs to the N-termini of proteins containing an N-terminal arginine or lysine. The protein is Leucyl/phenylalanyl-tRNA--protein transferase of Campylobacter jejuni subsp. jejuni serotype O:6 (strain 81116 / NCTC 11828).